The following is a 316-amino-acid chain: Glutathione synthetase (316 aa).

One can recognise an ATP-grasp domain in the interval 125–310 (KLFTAWFSDL…ITGMLMDAIE (186 aa)). Position 151 to 207 (151 to 207 (WEKHSDIILKPLDGMGGASIFRVKEGDPNLGVIAETLTEHGTRYCMAQNYLPAIKDG)) interacts with ATP. Glu281 and Asn283 together coordinate Mg(2+).

It belongs to the prokaryotic GSH synthase family. As to quaternary structure, homotetramer. Mg(2+) is required as a cofactor. The cofactor is Mn(2+).

It catalyses the reaction gamma-L-glutamyl-L-cysteine + glycine + ATP = glutathione + ADP + phosphate + H(+). It functions in the pathway sulfur metabolism; glutathione biosynthesis; glutathione from L-cysteine and L-glutamate: step 2/2. Its activity is regulated as follows. Inhibited by 7,8-dihydrofolate, methotrexate and trimethoprim. This Escherichia coli (strain K12) protein is Glutathione synthetase (gshB).